A 467-amino-acid chain; its full sequence is MRLYDTLSGGVRDFAPLRPGHVSIYLCGATVQGLPHIGHVRSGVAFDVLRRWLTAKGFDVAFIRNVTDIDDKILIKAADAGRPWWEWAATYERAFTAAYDALGVLPPSAEPRATGHITQMVELIDRLIERGHAYCADQEGNGDVYFSVSTLPEYGKLSGHRIDDVHQGEGVATGKRDQRDFTLWKGAKPGEPSWPTPWGRGRPGWHTECVAMCEAYLGAEFDIHAGGMDLVFPHHENEIAQAEAAGDGFARFWLHNGWVTMGGEKMSKSLGNVLAIPAVLQRVRAAELRYYLGSAHYRSMLEFSENALQDAARAYSGVEDFLHRVRVRVGAVVPGEWTPKFGAALDDDLAVPAALAEVHAARAEGNRALDAGDHDAALTYAMSIRAMMGILGADPLDERWESRDKTSAALAAVDVLVHAEVRRREDARARRDWAEADAIRDRLKEAGIEVTDTGDGPQWSLLDGTDK.

Residue Cys27 coordinates Zn(2+). The short motif at Ala29–His39 is the 'HIGH' region element. Residues Cys209, His234, and Glu238 each contribute to the Zn(2+) site. The 'KMSKS' region motif lies at Lys265–Ser269. Lys268 lines the ATP pocket.

The protein belongs to the class-I aminoacyl-tRNA synthetase family. In terms of assembly, monomer. Requires Zn(2+) as cofactor.

The protein localises to the cytoplasm. It catalyses the reaction tRNA(Cys) + L-cysteine + ATP = L-cysteinyl-tRNA(Cys) + AMP + diphosphate. This Mycolicibacterium gilvum (strain PYR-GCK) (Mycobacterium gilvum (strain PYR-GCK)) protein is Cysteine--tRNA ligase.